Reading from the N-terminus, the 225-residue chain is Uracil-DNA glycosylase (225 aa).

Aspartate 65 functions as the Proton acceptor in the catalytic mechanism.

The protein belongs to the uracil-DNA glycosylase (UDG) superfamily. UNG family.

It localises to the cytoplasm. The catalysed reaction is Hydrolyzes single-stranded DNA or mismatched double-stranded DNA and polynucleotides, releasing free uracil.. Its function is as follows. Excises uracil residues from the DNA which can arise as a result of misincorporation of dUMP residues by DNA polymerase or due to deamination of cytosine. The protein is Uracil-DNA glycosylase of Bacillus cytotoxicus (strain DSM 22905 / CIP 110041 / 391-98 / NVH 391-98).